A 138-amino-acid chain; its full sequence is Vesicle transport protein GOT1B (138 aa).

Methionine 1 bears the N-acetylmethionine mark. At 1-9 the chain is on the cytoplasmic side; the sequence is MISLTDTQK. A helical membrane pass occupies residues 10–30; that stretch reads IGMGLTGFGVFFLFFGMILFF. At 31 to 32 the chain is on the lumenal side; that stretch reads DK. The chain crosses the membrane as a helical span at residues 33–53; the sequence is ALLAIGNVLFVAGLAFVIGLE. The Cytoplasmic segment spans residues 54 to 68; it reads RTFRFFFQRHKVKAT. Glutamate 90 is a topological domain (lumenal). The helical transmembrane segment at 91–109 threads the bilayer; that stretch reads IYGFFLLFRGFFPVVVGFI. The Cytoplasmic segment spans residues 110–138; the sequence is RRVPVLGSLLNLPGIRSFVDKVGESNNMV.

Belongs to the GOT1 family.

Its subcellular location is the golgi apparatus membrane. May be involved in fusion of ER-derived transport vesicles with the Golgi complex. The sequence is that of Vesicle transport protein GOT1B (Golt1b) from Mus musculus (Mouse).